The primary structure comprises 494 residues: Smoothelin-like protein 1 (494 aa).

Composition is skewed to basic and acidic residues over residues 1-10 (MEQKEGKLSE), 74-104 (DEVKVESQREAGGKEDAEAELKKEDGEKEET), 112-166 (TGRK…KATV), and 179-232 (TGQR…KEEA). Residues 1 to 348 (MEQKEGKLSE…ARPRGPRAQN (348 aa)) are disordered. Residues 123-145 (KEAEEKESTLASEKQKAEEKEAK) adopt a coiled-coil conformation. Positions 233–255 (DAKEEAEDAEEAEPGSPSEEQEQ) are enriched in acidic residues. Low complexity-rich tracts occupy residues 269–279 (PSSPEEWPESP) and 302–314 (SPSASESSPSDVP). A compositionally biased stretch (basic and acidic residues) spans 324–335 (GEKKEKAPERRV). Serine 336 carries the post-translational modification Phosphoserine. Residues 378 to 484 (GGVKNMLLEW…YIQELYRSLV (107 aa)) form the Calponin-homology (CH) domain. Positions 476-494 (IQELYRSLVQKGLVKTKKK) are calmodulin-binding.

The protein belongs to the smoothelin family. As to quaternary structure, interacts with PPP1R12A. Post-translationally, maximal phosphorylation of Ser-336 correlates with maximal relaxation of aorta in response to acetylcholine. Expressed in striated muscles, specifically in type 2a fibers (at protein level).

The protein resides in the cytoplasm. It localises to the myofibril. The protein localises to the sarcomere. Its subcellular location is the i band. It is found in the m line. The protein resides in the nucleus. Plays a role in the regulation of contractile properties of both striated and smooth muscles. When unphosphorylated, may inhibit myosin dephosphorylation. Phosphorylation at Ser-299 reduces this inhibitory activity. In Homo sapiens (Human), this protein is Smoothelin-like protein 1 (SMTNL1).